The chain runs to 637 residues: Rab11 family-interacting protein 4 (637 aa).

The EF-hand domain maps to 49–84 (GQGEEVEKLVKYLDPNDLGRINFKDFCRGVFAMKGC). Ca(2+) contacts are provided by aspartate 62, asparagine 64, arginine 68, and aspartate 73. The necessary for interaction with RAB11A, subcellular location, homo- or heterooligomerization stretch occupies residues 82–637 (KGCEELLKDV…HNPSILEIKH (556 aa)). Disordered stretches follow at residues 138–175 (EEEA…PAEK) and 219–256 (YGEG…SAGQ). A coiled-coil region spans residues 280-617 (KINLLNDLEA…EEINFRLRQY (338 aa)). Positions 574-636 (EAKNLFAAQT…DHNPSILEIK (63 aa)) constitute an FIP-RBD domain.

As to quaternary structure, homodimer. Forms a complex with Rab11 (RAB11A or RAB11B) and ARF6. Interacts with RAB11A; the interaction is direct. Forms a heterooligomeric complex with RAB11FIP2, RAB11FIP3 and RAB11FIP5. Interacts with ECPAS. In terms of assembly, (Microbial infection) Interacts with human cytomegalovirus/HHV-5 protein gM/UL100. Present at high level in testis (at protein level). Weakly expressed in other tissues.

The protein resides in the endosome. Its subcellular location is the cytoplasm. It is found in the cytoskeleton. It localises to the spindle. The protein localises to the microtubule organizing center. The protein resides in the centrosome. Its subcellular location is the recycling endosome membrane. It is found in the cleavage furrow. It localises to the midbody. The protein localises to the cytoplasmic vesicle. Its function is as follows. Acts as a regulator of endocytic traffic by participating in membrane delivery. Required for the abscission step in cytokinesis, possibly by acting as an 'address tag' delivering recycling endosome membranes to the cleavage furrow during late cytokinesis. In case of infection by HCMV (human cytomegalovirus), may participate in egress of the virus out of nucleus; this function is independent of ARF6. The polypeptide is Rab11 family-interacting protein 4 (RAB11FIP4) (Homo sapiens (Human)).